Consider the following 547-residue polypeptide: Sensor histidine kinase CitA (547 aa).

Over 1–23 (MSIYPMYTRKITHWFARRSFQNR) the chain is Cytoplasmic. A helical transmembrane segment spans residues 24–44 (IFLLILFTSTIVMLAMSWYLT). Topologically, residues 45-180 (DITEERLHYQ…TIEQLENWLS (136 aa)) are periplasmic. 4 residues coordinate citrate: Arg109, His112, Arg150, and Lys152. The helical transmembrane segment at 181-201 (LQISSLLIPMAIMLLLLLFCA) threads the bilayer. Over 202-547 (RRFSLHIKKQ…IPLTRDEHHG (346 aa)) the chain is Cytoplasmic. Residues 225–264 (IQQSVLFESVFEGLIAIDSDYKITAINQTARRLLNLSQPE) enclose the PAS domain. The Histidine kinase domain occupies 347-542 (AVQHEHRNLI…IFTLYIPLTR (196 aa)). At His350 the chain carries Phosphohistidine; by autocatalysis.

As to quaternary structure, homodimer. In vitro CitB and the CitA kinase domain form a complex, formation of which is enhanced by ATP. Autophosphorylated.

It is found in the cell inner membrane. It catalyses the reaction ATP + protein L-histidine = ADP + protein N-phospho-L-histidine.. Member of the two-component regulatory system CitA/CitB. Probably activates CitB by phosphorylation. The periplasmic domain binds H-citrate(2-), which is essential for induction of the citrate-fermentation genes. The polypeptide is Sensor histidine kinase CitA (citA) (Klebsiella pneumoniae).